Here is a 193-residue protein sequence, read N- to C-terminus: Probable GTP-binding protein EngB (193 aa).

The EngB-type G domain maps to 20–193 (GVPEVAFAGR…ELAHEISRCI (174 aa)). GTP is bound by residues 28–35 (GRSNVGKS), 55–59 (GSTRQ), 73–76 (DLPG), 140–143 (TKAD), and 171–176 (IMWVSS). The Mg(2+) site is built by Ser35 and Thr57.

It belongs to the TRAFAC class TrmE-Era-EngA-EngB-Septin-like GTPase superfamily. EngB GTPase family. The cofactor is Mg(2+).

In terms of biological role, necessary for normal cell division and for the maintenance of normal septation. The polypeptide is Probable GTP-binding protein EngB (Anaplasma phagocytophilum (strain HZ)).